We begin with the raw amino-acid sequence, 192 residues long: Glycerol-3-phosphate acyltransferase (192 aa).

The next 5 membrane-spanning stretches (helical) occupy residues 4 to 24 (MFWL…AILL), 54 to 74 (LAIL…LIAS), 80 to 100 (IAQQ…PVYF), 112 to 132 (AGVL…AWLL), and 154 to 174 (LLAW…LLIV).

It belongs to the PlsY family. As to quaternary structure, probably interacts with PlsX.

The protein resides in the cell inner membrane. It catalyses the reaction an acyl phosphate + sn-glycerol 3-phosphate = a 1-acyl-sn-glycero-3-phosphate + phosphate. It participates in lipid metabolism; phospholipid metabolism. In terms of biological role, catalyzes the transfer of an acyl group from acyl-phosphate (acyl-PO(4)) to glycerol-3-phosphate (G3P) to form lysophosphatidic acid (LPA). This enzyme utilizes acyl-phosphate as fatty acyl donor, but not acyl-CoA or acyl-ACP. In Pseudomonas syringae pv. syringae (strain B728a), this protein is Glycerol-3-phosphate acyltransferase.